The chain runs to 248 residues: tRNA (guanine-N(1)-)-methyltransferase (248 aa).

S-adenosyl-L-methionine is bound by residues Gly-113 and 133–138 (IGDYVL).

This sequence belongs to the RNA methyltransferase TrmD family. Homodimer.

The protein localises to the cytoplasm. It carries out the reaction guanosine(37) in tRNA + S-adenosyl-L-methionine = N(1)-methylguanosine(37) in tRNA + S-adenosyl-L-homocysteine + H(+). In terms of biological role, specifically methylates guanosine-37 in various tRNAs. The chain is tRNA (guanine-N(1)-)-methyltransferase from Shewanella baltica (strain OS223).